Consider the following 743-residue polypeptide: Serine-rich coiled-coil domain-containing protein 1 (743 aa).

2 disordered regions span residues 1-125 (MGDS…SRNK) and 156-175 (KSEG…SVKQ). The segment covering 29–56 (LPSSPSSSNTVGVHSSSPSSTNSSSGST) has biased composition (low complexity). Over residues 81 to 102 (EPTNQNLSISNGAQPGQSSMQK) the composition is skewed to polar residues. Residues 672 to 713 (MKDECSMLKLQLKEKDELISQLQEELEKVQHLQKAFASRVDK) adopt a coiled-coil conformation.

It belongs to the CCSER family.

This Bos taurus (Bovine) protein is Serine-rich coiled-coil domain-containing protein 1 (CCSER1).